The following is a 169-amino-acid chain: Anaerobic nitrite reductase NSHB3 (169 aa).

The 151-residue stretch at 15–165 folds into the Globin domain; the sequence is RFTEEQEALV…LVAAIKQGMK (151 aa). The Homodimerization signature appears at 48–52; sequence EVAPS. Positions 58, 72, 76, 106, 110, and 111 each coordinate heme b. The Homodimerization signature appears at 118–130; that stretch reads DAHFEVAKFALLE.

It belongs to the plant globin family. As to quaternary structure, homodimer. Heme b is required as a cofactor.

Its subcellular location is the cytoplasm. The protein resides in the nucleus. It catalyses the reaction Fe(III)-heme b-[protein] + nitric oxide + H2O = Fe(II)-heme b-[protein] + nitrite + 2 H(+). Functionally, phytoglobin that reduces nitrite to nitric oxide under anoxic conditions (e.g. during flooding or in waterlogged soil). May not function as an oxygen storage or transport protein. Has an unusually high affinity for O(2) through an hexacoordinate heme iron because of a very low dissociation constant. The protein is Anaerobic nitrite reductase NSHB3 of Oryza sativa subsp. indica (Rice).